The following is a 408-amino-acid chain: Aminoacylase-1 (408 aa).

Histidine 76 serves as a coordination point for Zn(2+). Aspartate 78 is an active-site residue. Zn(2+) is bound at residue aspartate 109. Glutamate 143 functions as the Proton acceptor in the catalytic mechanism. Glutamate 144, glutamate 172, and histidine 379 together coordinate Zn(2+).

The protein belongs to the peptidase M20A family. Homodimer. It depends on Zn(2+) as a cofactor.

Its subcellular location is the cytoplasm. The catalysed reaction is an N-acyl-L-amino acid + H2O = an L-alpha-amino acid + a carboxylate. It catalyses the reaction an N-acetyl-L-cysteine-S-conjugate + H2O = an S-substituted L-cysteine + acetate. In terms of biological role, involved in the hydrolysis of N-acylated or N-acetylated amino acids (except L-aspartate). This is Aminoacylase-1 (acy1) from Dictyostelium discoideum (Social amoeba).